A 337-amino-acid polypeptide reads, in one-letter code: MAFFSRLNLQEGLQTFFVLQWIPVYIFLGAIPILLIPYFLLFSKFWPLAVLSLAWLTYDWNTHSQGGRRSAWVRNWTLWKYFRNYFPVKLVKTHDLSPKHNYIIANHPHGILSFGVFINFATEATGIARIFPSITPFVGTLERIFWIPIVREYVMSMGVCPVSSSALKYLLTQKGSGNAVVIVVGGAAEALLCRPGASTLFLKQRKGFVKMALQTGAYLVPSYSFGENEVFNQETFPEGTWLRLFQKTFQDTFKKILGLNFCTFHGRGFTRGSWGFLPFNRPITTVVGEPLPIPRIKRPNQKTVDKYHALYISALRKLFDQHKVEYGLPETQELTIT.

2 helical membrane passes run 22–42 (IPVY…FLLF) and 102–122 (YIIA…NFAT).

Belongs to the diacylglycerol acyltransferase family. As to expression, expressed in all tissues tested except pancreas.

The protein resides in the endoplasmic reticulum membrane. It catalyses the reaction 1,2-di-(9Z-octadecenoyl)-sn-glycerol + (9Z)-octadecenoyl-CoA = 1,2,3-tri-(9Z-octadecenoyl)-glycerol + CoA. The catalysed reaction is 1-O-(9Z-octadecenyl)-glycerol + (9Z)-octadecenoyl-CoA = 1-O-(9Z-octadecyl)-3-(9Z-octadecenoyl)-glycerol + CoA. The enzyme catalyses 1-(9Z-octadecenoyl)-glycerol + (9Z)-octadecenoyl-CoA = 1,2-di-(9Z-octadecenoyl)-glycerol + CoA. In terms of biological role, diglyceride acyltransferase that uses fatty acyl-CoA as substrate. Particularly active with oleate as a substrate. Has no wax synthase activity to produce wax esters. Able to use 1-monoalkylglycerol (1-MAkG) as an acyl acceptor for the synthesis of monoalkyl-monoacylglycerol (MAMAG). In Homo sapiens (Human), this protein is Diacylglycerol O-acyltransferase 2-like protein 6.